The following is a 1456-amino-acid chain: Putative 1-phosphatidylinositol-3-phosphate 5-kinase FAB1D (1456 aa).

Residues 1 to 19 (MTPSNSLSSSERSLSGECS) are compositionally biased toward low complexity. Disordered stretches follow at residues 1 to 110 (MTPS…EVDG), 533 to 592 (PVSV…NDIE), 925 to 944 (ENDNKVSDSGSNGGIDTPLV), 967 to 987 (VPEDNESQTLCSSSPDTTSPI), 1003 to 1022 (NGQEADKSIPVTGESLDDEV), and 1137 to 1159 (NNQDSKQTDRDVSRFSSESTNRL). The segment covering 43–57 (ELTKEVKVDRLERKS) has biased composition (basic and acidic residues). Over residues 86 to 110 (REDDSDDVPVWEPPEPENPEDEVDG) the composition is skewed to acidic residues. The span at 533–544 (PVSVDTDVSTTS) shows a compositional bias: low complexity. Residues 973–987 (SQTLCSSSPDTTSPI) are compositionally biased toward polar residues. Positions 1115 to 1443 (NNEESKKPLS…RFRKFMKTHF (329 aa)) constitute a PIPK domain. A compositionally biased stretch (polar residues) spans 1150–1159 (RFSSESTNRL).

As to quaternary structure, component of the PI(3,5)P2 regulatory complex at least composed of ATG18, SAC/FIG4, FAB1 and VAC14. Requires Mg(2+) as cofactor. Mn(2+) is required as a cofactor.

It carries out the reaction a 1,2-diacyl-sn-glycero-3-phospho-(1D-myo-inositol-3-phosphate) + ATP = a 1,2-diacyl-sn-glycero-3-phospho-(1D-myo-inositol-3,5-bisphosphate) + ADP + H(+). The PI(3,5)P2 regulatory complex regulates both the synthesis and turnover of phosphatidylinositol 3,5-bisphosphate (PtdIns(3,5)P2). Catalyzes the phosphorylation of phosphatidylinositol 3-phosphate on the fifth hydroxyl of the myo-inositol ring, to form phosphatidylinositol 3,5-bisphosphate. The polypeptide is Putative 1-phosphatidylinositol-3-phosphate 5-kinase FAB1D (FAB1D) (Arabidopsis thaliana (Mouse-ear cress)).